Consider the following 226-residue polypeptide: Protein-L-isoaspartate O-methyltransferase (226 aa).

The active site involves S75.

The protein belongs to the methyltransferase superfamily. L-isoaspartyl/D-aspartyl protein methyltransferase family.

The protein resides in the cytoplasm. It catalyses the reaction [protein]-L-isoaspartate + S-adenosyl-L-methionine = [protein]-L-isoaspartate alpha-methyl ester + S-adenosyl-L-homocysteine. Functionally, catalyzes the methyl esterification of L-isoaspartyl residues in peptides and proteins that result from spontaneous decomposition of normal L-aspartyl and L-asparaginyl residues. It plays a role in the repair and/or degradation of damaged proteins. This Lawsonia intracellularis (strain PHE/MN1-00) protein is Protein-L-isoaspartate O-methyltransferase.